A 782-amino-acid polypeptide reads, in one-letter code: E3 ubiquitin-protein ligase SopA (782 aa).

C753 functions as the Glycyl thioester intermediate in the catalytic mechanism.

Belongs to the SopA E3 ligase family. In terms of processing, ubiquitinated in the presence of host E1 ubiquitin-activating enzyme, E2 ubiquitin-conjugating enzyme and ubiquitin.

The protein localises to the secreted. Its subcellular location is the host cell. It catalyses the reaction S-ubiquitinyl-[E2 ubiquitin-conjugating enzyme]-L-cysteine + [acceptor protein]-L-lysine = [E2 ubiquitin-conjugating enzyme]-L-cysteine + N(6)-ubiquitinyl-[acceptor protein]-L-lysine.. Its function is as follows. Effector proteins function to alter host cell physiology and promote bacterial survival in host tissues. This protein is an E3 ubiquitin ligase that interferes with host's ubiquitination pathway. This Salmonella choleraesuis (strain SC-B67) protein is E3 ubiquitin-protein ligase SopA (sopA).